A 125-amino-acid polypeptide reads, in one-letter code: Protein sigma-1-small (125 aa).

It belongs to the orthoreovirus sigma-1s protein family.

The protein is Protein sigma-1-small (S1) of Mammalia (T2J).